Reading from the N-terminus, the 224-residue chain is Small ribosomal subunit protein uS3 (224 aa).

Residues 38-106 (LREFVKEKLG…EVYLNVVEVR (69 aa)) enclose the KH type-2 domain.

The protein belongs to the universal ribosomal protein uS3 family. Part of the 30S ribosomal subunit. Forms a tight complex with proteins S10 and S14.

Functionally, binds the lower part of the 30S subunit head. Binds mRNA in the 70S ribosome, positioning it for translation. This Anaeromyxobacter dehalogenans (strain 2CP-1 / ATCC BAA-258) protein is Small ribosomal subunit protein uS3.